The sequence spans 161 residues: 2-C-methyl-D-erythritol 2,4-cyclodiphosphate synthase (161 aa).

A divalent metal cation is bound by residues D11 and H13. 4-CDP-2-C-methyl-D-erythritol 2-phosphate contacts are provided by residues 11-13 and 37-38; these read DIH and HS. A divalent metal cation is bound at residue H45. 4-CDP-2-C-methyl-D-erythritol 2-phosphate is bound by residues 59–61, 135–138, and R145; these read DIG and TTNE.

Belongs to the IspF family. Homotrimer. The cofactor is a divalent metal cation.

It catalyses the reaction 4-CDP-2-C-methyl-D-erythritol 2-phosphate = 2-C-methyl-D-erythritol 2,4-cyclic diphosphate + CMP. It participates in isoprenoid biosynthesis; isopentenyl diphosphate biosynthesis via DXP pathway; isopentenyl diphosphate from 1-deoxy-D-xylulose 5-phosphate: step 4/6. Functionally, involved in the biosynthesis of isopentenyl diphosphate (IPP) and dimethylallyl diphosphate (DMAPP), two major building blocks of isoprenoid compounds. Catalyzes the conversion of 4-diphosphocytidyl-2-C-methyl-D-erythritol 2-phosphate (CDP-ME2P) to 2-C-methyl-D-erythritol 2,4-cyclodiphosphate (ME-CPP) with a corresponding release of cytidine 5-monophosphate (CMP). This is 2-C-methyl-D-erythritol 2,4-cyclodiphosphate synthase from Cyanothece sp. (strain PCC 7425 / ATCC 29141).